The sequence spans 382 residues: Mannitol-1-phosphate 5-dehydrogenase (382 aa).

Residue 3–14 participates in NAD(+) binding; it reads ALHFGAGNIGRG. Lys-269 is modified (N6-acetyllysine).

The protein belongs to the mannitol dehydrogenase family.

It catalyses the reaction D-mannitol 1-phosphate + NAD(+) = beta-D-fructose 6-phosphate + NADH + H(+). The polypeptide is Mannitol-1-phosphate 5-dehydrogenase (Escherichia coli O7:K1 (strain IAI39 / ExPEC)).